We begin with the raw amino-acid sequence, 274 residues long: Diaminopimelate epimerase (274 aa).

Residues asparagine 11, glutamine 44, and asparagine 64 each contribute to the substrate site. The active-site Proton donor is cysteine 73. Substrate-binding positions include 74–75 (GN), asparagine 157, asparagine 190, and 208–209 (ER). Cysteine 217 serves as the catalytic Proton acceptor. 218 to 219 (GS) is a binding site for substrate.

It belongs to the diaminopimelate epimerase family. As to quaternary structure, homodimer.

The protein resides in the cytoplasm. The enzyme catalyses (2S,6S)-2,6-diaminopimelate = meso-2,6-diaminopimelate. The protein operates within amino-acid biosynthesis; L-lysine biosynthesis via DAP pathway; DL-2,6-diaminopimelate from LL-2,6-diaminopimelate: step 1/1. In terms of biological role, catalyzes the stereoinversion of LL-2,6-diaminopimelate (L,L-DAP) to meso-diaminopimelate (meso-DAP), a precursor of L-lysine and an essential component of the bacterial peptidoglycan. The chain is Diaminopimelate epimerase from Escherichia coli O81 (strain ED1a).